A 160-amino-acid polypeptide reads, in one-letter code: Deoxyuridine 5'-triphosphate nucleotidohydrolase (160 aa).

Positions 80, 93, 96, 99, 104, 149, 154, and 155 each coordinate dUMP.

It belongs to the dUTPase family. As to quaternary structure, homotrimer. Mg(2+) serves as cofactor.

The catalysed reaction is dUTP + H2O = dUMP + diphosphate + H(+). The protein operates within pyrimidine metabolism; dUMP biosynthesis; dUMP from dCTP (dUTP route): step 2/2. Its function is as follows. Involved in nucleotide metabolism via production of dUMP, the immediate precursor of thymidine nucleotides, and decreases the intracellular concentration of dUTP so that uracil cannot be incorporated into DNA. The polypeptide is Deoxyuridine 5'-triphosphate nucleotidohydrolase (DUT1) (Debaryomyces hansenii (strain ATCC 36239 / CBS 767 / BCRC 21394 / JCM 1990 / NBRC 0083 / IGC 2968) (Yeast)).